The sequence spans 714 residues: Fatty acid oxidation complex subunit alpha (714 aa).

Positions 1-190 (MEMASAFTLN…KLGLVDDVVP (190 aa)) are enoyl-CoA hydratase. Residues 306–714 (APLNSVGILG…FWKTTATDLQ (409 aa)) form a 3-hydroxyacyl-CoA dehydrogenase region.

The protein in the N-terminal section; belongs to the enoyl-CoA hydratase/isomerase family. It in the central section; belongs to the 3-hydroxyacyl-CoA dehydrogenase family. Heterotetramer of two alpha chains (FadJ) and two beta chains (FadI).

It localises to the cytoplasm. It carries out the reaction a (3S)-3-hydroxyacyl-CoA = a (2E)-enoyl-CoA + H2O. The enzyme catalyses a 4-saturated-(3S)-3-hydroxyacyl-CoA = a (3E)-enoyl-CoA + H2O. The catalysed reaction is a (3S)-3-hydroxyacyl-CoA + NAD(+) = a 3-oxoacyl-CoA + NADH + H(+). It catalyses the reaction (3S)-3-hydroxybutanoyl-CoA = (3R)-3-hydroxybutanoyl-CoA. The protein operates within lipid metabolism; fatty acid beta-oxidation. Its function is as follows. Catalyzes the formation of a hydroxyacyl-CoA by addition of water on enoyl-CoA. Also exhibits 3-hydroxyacyl-CoA epimerase and 3-hydroxyacyl-CoA dehydrogenase activities. The chain is Fatty acid oxidation complex subunit alpha from Escherichia coli (strain SMS-3-5 / SECEC).